A 237-amino-acid polypeptide reads, in one-letter code: Ribonuclease PH (237 aa).

Phosphate contacts are provided by residues Arg-86 and 124–126 (GTR).

The protein belongs to the RNase PH family. In terms of assembly, homohexameric ring arranged as a trimer of dimers.

The enzyme catalyses tRNA(n+1) + phosphate = tRNA(n) + a ribonucleoside 5'-diphosphate. Functionally, phosphorolytic 3'-5' exoribonuclease that plays an important role in tRNA 3'-end maturation. Removes nucleotide residues following the 3'-CCA terminus of tRNAs; can also add nucleotides to the ends of RNA molecules by using nucleoside diphosphates as substrates, but this may not be physiologically important. Probably plays a role in initiation of 16S rRNA degradation (leading to ribosome degradation) during starvation. This Bradyrhizobium sp. (strain BTAi1 / ATCC BAA-1182) protein is Ribonuclease PH.